The chain runs to 790 residues: E3 ubiquitin-protein ligase Jade-2 (790 aa).

2 disordered regions span residues 1–52 and 111–130; these read MEEK…PSEV and GPPA…SQPD. Phosphoserine is present on residues serine 9 and serine 15. The segment covering 9 to 28 has biased composition (low complexity); the sequence is SISSDNSDTTDSHATSTSAS. N6-acetyllysine is present on residues lysine 32 and lysine 38. Residue serine 117 is modified to Phosphoserine. Residues 199–249 form a PHD-type 1 zinc finger; the sequence is DVVCDVCRSPEGEDGNEMVFCDKCNVCVHQACYGILKVPTGSWLCRTCALG. Residues 251–285 form a C2HC pre-PHD-type zinc finger; the sequence is QPKCLLCPKRGGALKPTRSGTKWVHVSCALWIPEV. At lysine 298 the chain carries N6-acetyllysine. Residues 309 to 365 form a PHD-type 2 zinc finger; it reads LSCSLCKECTGTCIQCSMPSCVTAFHVTCAFDHGLEMRTILADNDEVKFKSFCQEHS. Disordered regions lie at residues 361–386 and 578–777; these read CQEH…AGED and SFMR…PREA. Positions 372-381 are enriched in polar residues; that stretch reads EPTSEPTEPS. The segment covering 593–606 has biased composition (basic residues); the sequence is KARGRTRLPAKKKP. The segment covering 684 to 693 has biased composition (low complexity); it reads AASVAADSDV. Residues 737 to 747 show a composition bias toward basic and acidic residues; the sequence is ERPKVSLHFDT. Residues 757–767 show a composition bias toward acidic residues; the sequence is EMSDSDVEAED.

It belongs to the JADE family. In terms of assembly, component of the HBO1 complex composed at least of ING4 or ING5, MYST2/HBO1, MEAF6, and one of JADE1, JADE2 and JADE3. Interacts (via C-terminus) with KDM1A (via AOD/Tower domain).

The enzyme catalyses S-ubiquitinyl-[E2 ubiquitin-conjugating enzyme]-L-cysteine + [acceptor protein]-L-lysine = [E2 ubiquitin-conjugating enzyme]-L-cysteine + N(6)-ubiquitinyl-[acceptor protein]-L-lysine.. Its pathway is protein modification; protein ubiquitination. Its function is as follows. Scaffold subunit of some HBO1 complexes, which have a histone H4 acetyltransferase activity. Acts as an E3 ubiquitin-protein ligase mediating the ubiquitination and subsequent proteasomal degradation of target protein histone demethylase KDM1A. Also acts as a ubiquitin ligase E3 toward itself. Positive regulator of neurogenesis. This chain is E3 ubiquitin-protein ligase Jade-2 (JADE2), found in Homo sapiens (Human).